The chain runs to 127 residues: Fluoride-specific ion channel FluC 1 (127 aa).

4 helical membrane-spanning segments follow: residues 3-23 (LLIV…VGQW), 35-55 (IAML…FGLY), 74-94 (IGFF…VLLI), and 102-122 (LFSY…LGFY). Residues Gly-78 and Thr-81 each coordinate Na(+).

It belongs to the fluoride channel Fluc/FEX (TC 1.A.43) family.

The protein localises to the cell membrane. The enzyme catalyses fluoride(in) = fluoride(out). Na(+) is not transported, but it plays an essential structural role and its presence is essential for fluoride channel function. Functionally, fluoride-specific ion channel. Important for reducing fluoride concentration in the cell, thus reducing its toxicity. This Halalkalibacterium halodurans (strain ATCC BAA-125 / DSM 18197 / FERM 7344 / JCM 9153 / C-125) (Bacillus halodurans) protein is Fluoride-specific ion channel FluC 1.